The primary structure comprises 293 residues: Small ribosomal subunit biogenesis GTPase RsgA (293 aa).

A CP-type G domain is found at 63–223 (KNELVRPPIA…VADTPGFSSL (161 aa)). GTP is bound by residues 112-115 (SKMD) and 166-174 (GQSGVGKSS). 4 residues coordinate Zn(2+): Cys-247, Cys-252, His-254, and Cys-260.

The protein belongs to the TRAFAC class YlqF/YawG GTPase family. RsgA subfamily. Monomer. Associates with 30S ribosomal subunit, binds 16S rRNA. It depends on Zn(2+) as a cofactor.

It localises to the cytoplasm. Functionally, one of several proteins that assist in the late maturation steps of the functional core of the 30S ribosomal subunit. Helps release RbfA from mature subunits. May play a role in the assembly of ribosomal proteins into the subunit. Circularly permuted GTPase that catalyzes slow GTP hydrolysis, GTPase activity is stimulated by the 30S ribosomal subunit. This chain is Small ribosomal subunit biogenesis GTPase RsgA, found in Bacillus cereus (strain ATCC 14579 / DSM 31 / CCUG 7414 / JCM 2152 / NBRC 15305 / NCIMB 9373 / NCTC 2599 / NRRL B-3711).